The sequence spans 291 residues: Beta-lactamase CTX-M-15 (291 aa).

An N-terminal signal peptide occupies residues 1-28 (MVKKSLRQFTLMATATVTLLLGSVPLYA). The active-site Nucleophile; acyl-ester intermediate is the S73. A beta-lactam is bound by residues K76, S133, E169, and S240.

This sequence belongs to the class-A beta-lactamase family. Monomer.

Its subcellular location is the secreted. The enzyme catalyses a beta-lactam + H2O = a substituted beta-amino acid. Inhibited by the beta-lactamase-blocking agents clavulanic acid and avibactam, via a covalent binding to Ser-73. Extended-spectrum beta-lactamase (ESBL) which confers resistance to penicillins, as well as first, second, third and fourth-generation cephalosporins. Has cefotaxime- and ceftazidime-hydrolyzing activity. Inactive against the carbapenem antibiotics, imipenem, meropenem and ertapenem. This is Beta-lactamase CTX-M-15 from Escherichia coli O25b:H4.